We begin with the raw amino-acid sequence, 157 residues long: 6,7-dimethyl-8-ribityllumazine synthase (157 aa).

Residues F22, 57–59, and 81–83 contribute to the 5-amino-6-(D-ribitylamino)uracil site; these read AYE and TVI. (2S)-2-hydroxy-3-oxobutyl phosphate is bound at residue 86-87; sequence GT. H89 serves as the catalytic Proton donor. Residue F114 coordinates 5-amino-6-(D-ribitylamino)uracil. R128 contacts (2S)-2-hydroxy-3-oxobutyl phosphate.

Belongs to the DMRL synthase family. As to quaternary structure, forms an icosahedral capsid composed of 60 subunits, arranged as a dodecamer of pentamers.

The enzyme catalyses (2S)-2-hydroxy-3-oxobutyl phosphate + 5-amino-6-(D-ribitylamino)uracil = 6,7-dimethyl-8-(1-D-ribityl)lumazine + phosphate + 2 H2O + H(+). It functions in the pathway cofactor biosynthesis; riboflavin biosynthesis; riboflavin from 2-hydroxy-3-oxobutyl phosphate and 5-amino-6-(D-ribitylamino)uracil: step 1/2. Functionally, catalyzes the formation of 6,7-dimethyl-8-ribityllumazine by condensation of 5-amino-6-(D-ribitylamino)uracil with 3,4-dihydroxy-2-butanone 4-phosphate. This is the penultimate step in the biosynthesis of riboflavin. This is 6,7-dimethyl-8-ribityllumazine synthase from Haemophilus influenzae (strain 86-028NP).